A 317-amino-acid chain; its full sequence is Apolipoprotein E (317 aa).

Residues 1 to 18 (MKVLWAALLVTFLAGCQA) form the signal peptide. 8 tandem repeats follow at residues 80-101 (TLMD…EQLS), 102-123 (PVAE…ARLG), 124-145 (ADME…AMLG), 146-167 (QSTE…KRLL), 168-189 (RDAD…EGAE), 190-211 (RGVS…VRAA), 212-233 (TVGS…ERLR), and 234-255 (ARME…EQVA). Positions 80-255 (TLMDETMKEL…RLDEVKEQVA (176 aa)) are 8 X 22 AA approximate tandem repeats. Position 143 is a methionine sulfoxide (Met-143). Ser-147 is subject to Phosphoserine. Residues 158–168 (HLRKLRKRLLR) form an LDL and other lipoprotein receptors binding region. 162 to 165 (LRKR) contributes to the heparin binding site. Residues 210–290 (AATVGSLAGQ…SWFEPLVEDM (81 aa)) form a lipid-binding and lipoprotein association region. Residue 229-236 (GERLRARM) coordinates heparin. A homooligomerization region spans residues 266 to 317 (QQISLQAEAFQARLKSWFEPLVEDMQRQWAGLVEKVQAAVGASTAPVPSDNH). Positions 278–290 (RLKSWFEPLVEDM) are specificity for association with VLDL.

Belongs to the apolipoprotein A1/A4/E family. As to quaternary structure, homotetramer. May interact with ABCA1; functionally associated with ABCA1 in the biogenesis of HDLs. May interact with APP/A4 amyloid-beta peptide; the interaction is extremely stable in vitro but its physiological significance is unclear. May interact with MAPT. May interact with MAP2. In the cerebrospinal fluid, interacts with secreted SORL1. Interacts with PMEL; this allows the loading of PMEL luminal fragment on ILVs to induce fibril nucleation. Post-translationally, APOE exists as multiple glycosylated and sialylated glycoforms within cells and in plasma. The extent of glycosylation and sialylation are tissue and context specific. In terms of processing, glycated in plasma VLDL. Phosphorylated by FAM20C in the extracellular medium.

It localises to the secreted. The protein resides in the extracellular space. Its subcellular location is the extracellular matrix. The protein localises to the extracellular vesicle. It is found in the endosome. It localises to the multivesicular body. In terms of biological role, APOE is an apolipoprotein, a protein associating with lipid particles, that mainly functions in lipoprotein-mediated lipid transport between organs via the plasma and interstitial fluids. APOE is a core component of plasma lipoproteins and is involved in their production, conversion and clearance. Apolipoproteins are amphipathic molecules that interact both with lipids of the lipoprotein particle core and the aqueous environment of the plasma. As such, APOE associates with chylomicrons, chylomicron remnants, very low density lipoproteins (VLDL) and intermediate density lipoproteins (IDL) but shows a preferential binding to high-density lipoproteins (HDL). It also binds a wide range of cellular receptors including the LDL receptor/LDLR, the LDL receptor-related proteins LRP1, LRP2 and LRP8 and the very low-density lipoprotein receptor/VLDLR that mediate the cellular uptake of the APOE-containing lipoprotein particles. Finally, APOE also has a heparin-binding activity and binds heparan-sulfate proteoglycans on the surface of cells, a property that supports the capture and the receptor-mediated uptake of APOE-containing lipoproteins by cells. A main function of APOE is to mediate lipoprotein clearance through the uptake of chylomicrons, VLDLs, and HDLs by hepatocytes. APOE is also involved in the biosynthesis by the liver of VLDLs as well as their uptake by peripheral tissues ensuring the delivery of triglycerides and energy storage in muscle, heart and adipose tissues. By participating in the lipoprotein-mediated distribution of lipids among tissues, APOE plays a critical role in plasma and tissues lipid homeostasis. APOE is also involved in two steps of reverse cholesterol transport, the HDLs-mediated transport of cholesterol from peripheral tissues to the liver, and thereby plays an important role in cholesterol homeostasis. First, it is functionally associated with ABCA1 in the biogenesis of HDLs in tissues. Second, it is enriched in circulating HDLs and mediates their uptake by hepatocytes. APOE also plays an important role in lipid transport in the central nervous system, regulating neuron survival and sprouting. The polypeptide is Apolipoprotein E (APOE) (Colobus guereza (Mantled guereza)).